The following is a 477-amino-acid chain: Chromosomal replication initiator protein DnaA (477 aa).

The tract at residues 1–87 (MSDRSDPTHA…AGVSNFAIVV (87 aa)) is domain I, interacts with DnaA modulators. The segment at 87 to 132 (VNPEIAQDAFAQHPEPAAEQPYIETPTITAPTDNPGLPASPSRGDS) is domain II. The tract at residues 112–131 (PTITAPTDNPGLPASPSRGD) is disordered. Positions 133-349 (RLNPKYGFDT…GTLIRVTAFA (217 aa)) are domain III, AAA+ region. 4 residues coordinate ATP: G177, G179, K180, and T181. A domain IV, binds dsDNA region spans residues 350–477 (SLNKTPVDLA…IKQNHRYGKM (128 aa)).

The protein belongs to the DnaA family. Oligomerizes as a right-handed, spiral filament on DNA at oriC.

The protein resides in the cytoplasm. Its function is as follows. Plays an essential role in the initiation and regulation of chromosomal replication. ATP-DnaA binds to the origin of replication (oriC) to initiate formation of the DNA replication initiation complex once per cell cycle. Binds the DnaA box (a 9 base pair repeat at the origin) and separates the double-stranded (ds)DNA. Forms a right-handed helical filament on oriC DNA; dsDNA binds to the exterior of the filament while single-stranded (ss)DNA is stabiized in the filament's interior. The ATP-DnaA-oriC complex binds and stabilizes one strand of the AT-rich DNA unwinding element (DUE), permitting loading of DNA polymerase. After initiation quickly degrades to an ADP-DnaA complex that is not apt for DNA replication. Binds acidic phospholipids. This Clavibacter michiganensis subsp. michiganensis (strain NCPPB 382) protein is Chromosomal replication initiator protein DnaA.